A 249-amino-acid chain; its full sequence is Histone H1 (249 aa).

2 stretches are compositionally biased toward low complexity: residues 1–19 (MSDSVVAVSASPVTPQTAS) and 27–43 (KKPASASASKAKKTTAP). Disordered regions lie at residues 1–53 (MSDS…QQMV) and 105–249 (QTKG…ATKK). The 75-residue stretch at 45–119 (THPPTQQMVD…GASGSFKLSA (75 aa)) folds into the H15 domain. Over residues 121–134 (SKKEPKPKVSSVEK) the composition is skewed to basic and acidic residues. Residues 146–158 (AKKKTISATKKPK) show a composition bias toward basic residues. Positions 173–190 (KSVDKKKAEKAKAKDAKK) are enriched in basic and acidic residues. Positions 195–233 (KAKPTTAKAKSSAAKPKTPKPKTTSAKPKKVVAAASPKK) are enriched in low complexity. The span at 234 to 249 (AAAKKPKAKTASATKK) shows a compositional bias: basic residues.

This sequence belongs to the histone H1/H5 family.

It is found in the nucleus. It localises to the chromosome. Functionally, histones H1 are necessary for the condensation of nucleosome chains into higher-order structures. This Drosophila hydei (Fruit fly) protein is Histone H1 (His1).